The following is a 186-amino-acid chain: Photosystem I assembly protein Ycf4 (186 aa).

The next 2 membrane-spanning stretches (helical) occupy residues 22-42 and 57-77; these read FCWA…GTSS and IIFF…LFIS.

This sequence belongs to the Ycf4 family.

Its subcellular location is the plastid. It localises to the chloroplast thylakoid membrane. Functionally, seems to be required for the assembly of the photosystem I complex. This Vitis vinifera (Grape) protein is Photosystem I assembly protein Ycf4.